Here is a 95-residue protein sequence, read N- to C-terminus: Glutamyl-tRNA(Gln) amidotransferase subunit C (95 aa).

Belongs to the GatC family. Heterotrimer of A, B and C subunits.

The enzyme catalyses L-glutamyl-tRNA(Gln) + L-glutamine + ATP + H2O = L-glutaminyl-tRNA(Gln) + L-glutamate + ADP + phosphate + H(+). It catalyses the reaction L-aspartyl-tRNA(Asn) + L-glutamine + ATP + H2O = L-asparaginyl-tRNA(Asn) + L-glutamate + ADP + phosphate + 2 H(+). Functionally, allows the formation of correctly charged Asn-tRNA(Asn) or Gln-tRNA(Gln) through the transamidation of misacylated Asp-tRNA(Asn) or Glu-tRNA(Gln) in organisms which lack either or both of asparaginyl-tRNA or glutaminyl-tRNA synthetases. The reaction takes place in the presence of glutamine and ATP through an activated phospho-Asp-tRNA(Asn) or phospho-Glu-tRNA(Gln). This chain is Glutamyl-tRNA(Gln) amidotransferase subunit C, found in Mesorhizobium japonicum (strain LMG 29417 / CECT 9101 / MAFF 303099) (Mesorhizobium loti (strain MAFF 303099)).